We begin with the raw amino-acid sequence, 210 residues long: Large ribosomal subunit protein uL3 (210 aa).

This sequence belongs to the universal ribosomal protein uL3 family. Part of the 50S ribosomal subunit. Forms a cluster with proteins L14 and L19.

One of the primary rRNA binding proteins, it binds directly near the 3'-end of the 23S rRNA, where it nucleates assembly of the 50S subunit. The polypeptide is Large ribosomal subunit protein uL3 (Natranaerobius thermophilus (strain ATCC BAA-1301 / DSM 18059 / JW/NM-WN-LF)).